Here is a 209-residue protein sequence, read N- to C-terminus: Large ribosomal subunit protein bL21m (209 aa).

The transit peptide at 1 to 43 (MAAAIAASALPGAFGRLVSVCSRSILASQGSGSASLWSASRRF) directs the protein to the mitochondrion.

The protein belongs to the bacterial ribosomal protein bL21 family. In terms of assembly, component of the mitochondrial ribosome large subunit (39S) which comprises a 16S rRNA and about 50 distinct proteins.

The protein resides in the mitochondrion. The chain is Large ribosomal subunit protein bL21m (Mrpl21) from Mus musculus (Mouse).